A 125-amino-acid polypeptide reads, in one-letter code: MSGRGKGGKARAKAKSRSSRAGLQFPVGRVHRFLRKGNYAERVGAGAPVYLAAVMEYLAAEILELAGNAARDNKKTRINPRHLQLAIRNDEELNKLLSGVTIAQGGVLPNIQAVLLPKKTAKAAK.

Positions 1–18 (MSGRGKGGKARAKAKSRS) are enriched in basic residues. Residues 1–21 (MSGRGKGGKARAKAKSRSSRA) form a disordered region. N-acetylserine is present on S2. S2 carries the post-translational modification Phosphoserine. Q104 is subject to N5-methylglutamine.

The protein belongs to the histone H2A family. As to quaternary structure, the nucleosome is a histone octamer containing two molecules each of H2A, H2B, H3 and H4 assembled in one H3-H4 heterotetramer and two H2A-H2B heterodimers. The octamer wraps approximately 147 bp of DNA.

It localises to the nucleus. The protein localises to the chromosome. Functionally, core component of nucleosome. Nucleosomes wrap and compact DNA into chromatin, limiting DNA accessibility to the cellular machineries which require DNA as a template. Histones thereby play a central role in transcription regulation, DNA repair, DNA replication and chromosomal stability. DNA accessibility is regulated via a complex set of post-translational modifications of histones, also called histone code, and nucleosome remodeling. The protein is Histone H2A of Asterias rubens (Common European starfish).